The following is a 225-amino-acid chain: UPF0758 protein Sbal223_0402 (225 aa).

An MPN domain is found at 102–224 (VLTNPDLTRD…IVSFAERGWI (123 aa)). Positions 173, 175, and 186 each coordinate Zn(2+). The short motif at 173–186 (HNHPSGIAEPSQAD) is the JAMM motif element.

It belongs to the UPF0758 family.

The chain is UPF0758 protein Sbal223_0402 from Shewanella baltica (strain OS223).